A 978-amino-acid polypeptide reads, in one-letter code: Retinoblastoma-related protein 2 (978 aa).

Residues 385-585 (TPVTSAMTTA…EKGSSLYNSL (201 aa)) are domain A. A pocket region spans residues 385–832 (TPVTSAMTTA…NQVFVPTVKP (448 aa)). Residues 586 to 704 (VVARPSLSTE…PVSGNEKCAV (119 aa)) form a spacer region. The segment at 616 to 645 (QSIHPDGLPPTPSKRWPSAGPDGNCYPQSP) is disordered. The domain B stretch occupies residues 705-832 (VGVQIFFSKI…NQVFVPTVKP (128 aa)). Disordered regions lie at residues 841 to 878 (STRP…SSSH) and 947 to 978 (VAGS…KTDS). Over residues 850-864 (TNSQIPGSPKSSPFS) the composition is skewed to polar residues. The span at 958 to 971 (SASSDPAAAFSPLS) shows a compositional bias: low complexity.

Belongs to the retinoblastoma protein (RB) family.

Its subcellular location is the nucleus. Regulator of biological processes that recruits a histone deacetylase to control gene transcription. May play a role in the entry into mitosis, negatively regulating the cell proliferation. Formation of stable complexes with geminiviridae replication-associated proteins may create a cellular environment which favors viral DNA replication. The chain is Retinoblastoma-related protein 2 (RBR2) from Oryza sativa subsp. japonica (Rice).